The following is a 146-amino-acid chain: Transcriptional repressor NrdR (146 aa).

The segment at 3–34 (CPFCQNPDTKVIDTRISDDGHSIRRRRVCPKC) is a zinc-finger region. Residues 46-136 (LLVTKRSGGV…VYQNFAGLED (91 aa)) form the ATP-cone domain.

Belongs to the NrdR family. Zn(2+) is required as a cofactor.

In terms of biological role, negatively regulates transcription of bacterial ribonucleotide reductase nrd genes and operons by binding to NrdR-boxes. This Bifidobacterium longum (strain NCC 2705) protein is Transcriptional repressor NrdR.